Reading from the N-terminus, the 255-residue chain is ATP synthase subunit b 1 (255 aa).

Residues 5-22 (WITVAAQIVNFLLLIWLL) traverse the membrane as a helical segment.

It belongs to the ATPase B chain family. F-type ATPases have 2 components, F(1) - the catalytic core - and F(0) - the membrane proton channel. F(1) has five subunits: alpha(3), beta(3), gamma(1), delta(1), epsilon(1). F(0) has three main subunits: a(1), b(2) and c(10-14). The alpha and beta chains form an alternating ring which encloses part of the gamma chain. F(1) is attached to F(0) by a central stalk formed by the gamma and epsilon chains, while a peripheral stalk is formed by the delta and b chains.

Its subcellular location is the cell inner membrane. Functionally, f(1)F(0) ATP synthase produces ATP from ADP in the presence of a proton or sodium gradient. F-type ATPases consist of two structural domains, F(1) containing the extramembraneous catalytic core and F(0) containing the membrane proton channel, linked together by a central stalk and a peripheral stalk. During catalysis, ATP synthesis in the catalytic domain of F(1) is coupled via a rotary mechanism of the central stalk subunits to proton translocation. Component of the F(0) channel, it forms part of the peripheral stalk, linking F(1) to F(0). The sequence is that of ATP synthase subunit b 1 from Dinoroseobacter shibae (strain DSM 16493 / NCIMB 14021 / DFL 12).